Consider the following 209-residue polypeptide: Probable nicotinate-nucleotide adenylyltransferase (209 aa).

This sequence belongs to the NadD family.

It carries out the reaction nicotinate beta-D-ribonucleotide + ATP + H(+) = deamido-NAD(+) + diphosphate. The protein operates within cofactor biosynthesis; NAD(+) biosynthesis; deamido-NAD(+) from nicotinate D-ribonucleotide: step 1/1. In terms of biological role, catalyzes the reversible adenylation of nicotinate mononucleotide (NaMN) to nicotinic acid adenine dinucleotide (NaAD). This is Probable nicotinate-nucleotide adenylyltransferase from Shewanella woodyi (strain ATCC 51908 / MS32).